The following is a 206-amino-acid chain: MKPLFPMLTAAAIAAGLAAPAQASAVAQLKAFVSGSKTLSADFNQTVTNKGKREEASGRLEIARPGKFRWEYTKPYAQLIVGDGKTLWIYDQDLAQVTRKAQGAALGSSPAALLAGNNEIERSYKLNEAGKQGDLEWLAASPKKQDNTFSAIRMGFKNNVLVEMQLTDSFGNDTRIVFSQQRQNAALPPARFAFAPPKGVDVVSGD.

The signal sequence occupies residues 1–23; sequence MKPLFPMLTAAAIAAGLAAPAQA.

It belongs to the LolA family. Monomer.

The protein resides in the periplasm. Functionally, participates in the translocation of lipoproteins from the inner membrane to the outer membrane. Only forms a complex with a lipoprotein if the residue after the N-terminal Cys is not an aspartate (The Asp acts as a targeting signal to indicate that the lipoprotein should stay in the inner membrane). The sequence is that of Outer-membrane lipoprotein carrier protein from Chromobacterium violaceum (strain ATCC 12472 / DSM 30191 / JCM 1249 / CCUG 213 / NBRC 12614 / NCIMB 9131 / NCTC 9757 / MK).